Consider the following 2353-residue polypeptide: Otogelin-like protein (2353 aa).

Positions 1 to 31 (MNIVRKLNLMIPWSIFLLHVLLFSLQEYICA) are cleaved as a signal peptide. The region spanning 121-297 (GICKTWGQYH…VQTPDDTKCV (177 aa)) is the VWFD 1 domain. Intrachain disulfides connect cysteine 123–cysteine 257 and cysteine 145–cysteine 296. Asparagine 144 carries an N-linked (GlcNAc...) asparagine glycan. The TIL 1 domain maps to 390–443 (CDDSFVHRDCISCCPPTCTFEKQCLGSNLHCLDGCYCPDGLVMDNGTCISLENC). N-linked (GlcNAc...) asparagine glycans are attached at residues asparagine 434 and asparagine 473. Positions 481–654 (VQCSVVGDSH…NAWRVSSTCF (174 aa)) constitute a VWFD 2 domain. 3 disulfides stabilise this stretch: cysteine 483–cysteine 618, cysteine 505–cysteine 653, and cysteine 527–cysteine 535. The TIL 2 domain occupies 745–800 (CQKGMLYHHCSSFCLHSCISLSSPEQCSDDCAEGCNCPEGKFYEDTLNFCVPIFHC). N-linked (GlcNAc...) asparagine glycans are attached at residues asparagine 826 and asparagine 876. In terms of domain architecture, VWFD 3 spans 946-1115 (AVCTIYGDRH…SWALGQCESP (170 aa)). Cystine bridges form between cysteine 948-cysteine 1078 and cysteine 992-cysteine 999. Asparagine 1289, asparagine 1604, and asparagine 2198 each carry an N-linked (GlcNAc...) asparagine glycan. Positions 1534–1723 (CRCSMLSELS…SWEIEKSFEV (190 aa)) constitute a VWFD 4 domain. A disulfide bridge links cysteine 1536 with cysteine 1683. Intrachain disulfides connect cysteine 2261-cysteine 2317, cysteine 2282-cysteine 2331, cysteine 2293-cysteine 2348, and cysteine 2297-cysteine 2350. A CTCK domain is found at 2261–2353 (CKREERICQK…EPIDCTCQWN (93 aa)).

The protein belongs to the otogelin family. In terms of tissue distribution, expressed at high levels in fetal inner ear and heart. Low levels in fetal skeletal muscle, kidney, spleen and colon. Not detected in fetal liver, lung, brain, nor in fetal stomach. In adult tissues, highest levels in brain, kidney, heart and retina. Relatively low levels in lung, spleen and duodenum. Not detected in adult skeletal muscle, liver, nor testis.

It is found in the secreted. In Homo sapiens (Human), this protein is Otogelin-like protein (OTOGL).